Consider the following 188-residue polypeptide: Elongation factor P (188 aa).

The protein belongs to the elongation factor P family.

The protein resides in the cytoplasm. It participates in protein biosynthesis; polypeptide chain elongation. In terms of biological role, involved in peptide bond synthesis. Stimulates efficient translation and peptide-bond synthesis on native or reconstituted 70S ribosomes in vitro. Probably functions indirectly by altering the affinity of the ribosome for aminoacyl-tRNA, thus increasing their reactivity as acceptors for peptidyl transferase. The sequence is that of Elongation factor P from Anaplasma marginale (strain Florida).